The sequence spans 154 residues: Cytochrome c oxidase subunit 5A, mitochondrial (154 aa).

Residues 1–45 constitute a mitochondrion transit peptide; sequence MLAAALRRCXASVRVLLPKPGAAAPSSWSSSAFRATAAIQSVRCY. An SIFI-degron motif is present at residues 2–21; that stretch reads LAAALRRCXASVRVLLPKPG. N6-acetyllysine is present on residues lysine 91 and lysine 117. Threonine 145 bears the Phosphothreonine mark.

It belongs to the cytochrome c oxidase subunit 5A family. As to quaternary structure, component of the cytochrome c oxidase (complex IV, CIV), a multisubunit enzyme composed of 14 subunits. The complex is composed of a catalytic core of 3 subunits MT-CO1, MT-CO2 and MT-CO3, encoded in the mitochondrial DNA, and 11 supernumerary subunits COX4I, COX5A, COX5B, COX6A, COX6B, COX6C, COX7A, COX7B, COX7C, COX8 and NDUFA4, which are encoded in the nuclear genome. The complex exists as a monomer or a dimer and forms supercomplexes (SCs) in the inner mitochondrial membrane with NADH-ubiquinone oxidoreductase (complex I, CI) and ubiquinol-cytochrome c oxidoreductase (cytochrome b-c1 complex, complex III, CIII), resulting in different assemblies (supercomplex SCI(1)III(2)IV(1) and megacomplex MCI(2)III(2)IV(2)). Interacts with AFG1L. Interacts with RAB5IF. In terms of processing, in response to mitochondrial stress, the precursor protein is ubiquitinated by the SIFI complex in the cytoplasm before mitochondrial import, leading to its degradation. Within the SIFI complex, UBR4 initiates ubiquitin chain that are further elongated or branched by KCMF1.

The protein localises to the mitochondrion inner membrane. It functions in the pathway energy metabolism; oxidative phosphorylation. Its function is as follows. Component of the cytochrome c oxidase, the last enzyme in the mitochondrial electron transport chain which drives oxidative phosphorylation. The respiratory chain contains 3 multisubunit complexes succinate dehydrogenase (complex II, CII), ubiquinol-cytochrome c oxidoreductase (cytochrome b-c1 complex, complex III, CIII) and cytochrome c oxidase (complex IV, CIV), that cooperate to transfer electrons derived from NADH and succinate to molecular oxygen, creating an electrochemical gradient over the inner membrane that drives transmembrane transport and the ATP synthase. Cytochrome c oxidase is the component of the respiratory chain that catalyzes the reduction of oxygen to water. Electrons originating from reduced cytochrome c in the intermembrane space (IMS) are transferred via the dinuclear copper A center (CU(A)) of subunit 2 and heme A of subunit 1 to the active site in subunit 1, a binuclear center (BNC) formed by heme A3 and copper B (CU(B)). The BNC reduces molecular oxygen to 2 water molecules using 4 electrons from cytochrome c in the IMS and 4 protons from the mitochondrial matrix. This Notamacropus parma (Parma wallaby) protein is Cytochrome c oxidase subunit 5A, mitochondrial (COX5A).